The sequence spans 465 residues: 6-phospho-beta-glucosidase (465 aa).

E173 (proton donor) is an active-site residue. The active-site Nucleophile is E362.

Belongs to the glycosyl hydrolase 1 family.

The enzyme catalyses 6-phospho-beta-D-glucosyl-(1-&gt;4)-D-glucose + H2O = D-glucose 6-phosphate + D-glucose. It participates in carbohydrate metabolism; beta-glucoside metabolism. The protein is 6-phospho-beta-glucosidase (arbB) of Dickeya chrysanthemi (Pectobacterium chrysanthemi).